A 224-amino-acid polypeptide reads, in one-letter code: Urease accessory protein UreF (224 aa).

The protein belongs to the UreF family. UreD, UreF and UreG form a complex that acts as a GTP-hydrolysis-dependent molecular chaperone, activating the urease apoprotein by helping to assemble the nickel containing metallocenter of UreC. The UreE protein probably delivers the nickel.

Its subcellular location is the cytoplasm. Its function is as follows. Required for maturation of urease via the functional incorporation of the urease nickel metallocenter. This is Urease accessory protein UreF from Methylorubrum populi (strain ATCC BAA-705 / NCIMB 13946 / BJ001) (Methylobacterium populi).